Reading from the N-terminus, the 226-residue chain is MARLLQASCLLSLLLAGFVPQSRGQEKSKMDCHGGISGTIYEYGALTIDGEEYIPFKQYAGKYVLFVNVASYUGLTGQYIELNALQEELAPFGLVILGFPCNQFGKQEPGENSEILPTLKYVRPGGGFVPNFQLFEKGDVNGEKEQKFYTFLKNSCPPTSELLGTSDRLFWEPMKVHDIRWNFEKFLVGPDGIPIMRWHHRTTVSNVKMDILSYMRRQAALGVKRK.

An N-terminal signal peptide occupies residues M1–G24. U73 is a catalytic residue. A non-standard amino acid (selenocysteine) is located at residue U73.

This sequence belongs to the glutathione peroxidase family. Homotetramer. Secreted in plasma.

Its subcellular location is the secreted. It carries out the reaction 2 glutathione + H2O2 = glutathione disulfide + 2 H2O. The catalysed reaction is tert-butyl hydroperoxide + 2 glutathione = tert-butanol + glutathione disulfide + H2O. Its function is as follows. Protects cells and enzymes from oxidative damage, by catalyzing the reduction of hydrogen peroxide, lipid peroxides and organic hydroperoxide, by glutathione. The sequence is that of Glutathione peroxidase 3 from Pongo pygmaeus (Bornean orangutan).